Consider the following 139-residue polypeptide: uncharacterized protein (139 aa).

This is an uncharacterized protein from Caenorhabditis elegans.